Reading from the N-terminus, the 154-residue chain is UPF0225 protein SG1365 (154 aa).

The protein belongs to the UPF0225 family.

This is UPF0225 protein SG1365 from Sodalis glossinidius (strain morsitans).